The sequence spans 335 residues: MYIIFALLAFSALILVHELGHFIVAKLNGIYVEEFAIGMGPKLFGVKVGETEYNLRILPFGGFVKMLGEEDESDDSRSLNAKTPIQRILVMGAGAFMNYVLALIIFIGLAMSSGFAENKVASVVPNSPAQEIGIEQGDEFLKIDGNKIHTTDDFRMGLALAKGNPVELEIKRGNDVLTKTVQPILNESGMYQVGISYALVEKPTLLQGIKQGFNETRSLVSQSFIALKTIVTGEANLKTDVGGPVTIIKMSGQAAKAGANTLLWFMAFLSVQLAVFNLLPFPALDGGRIFIELIQMIIRKEIPAKYIEAVNTVGFMLLMGLMVLVTIKDIIFPIL.

H17 lines the Zn(2+) pocket. E18 is a catalytic residue. Residue H21 participates in Zn(2+) binding. 3 helical membrane-spanning segments follow: residues 88–110 (ILVM…IGLA), 262–284 (LLWF…FPAL), and 312–334 (TVGF…IFPI). The PDZ domain maps to 96-174 (FMNYVLALII…PVELEIKRGN (79 aa)).

Belongs to the peptidase M50B family. Zn(2+) serves as cofactor.

It localises to the cell membrane. The polypeptide is Putative zinc metalloprotease CPE1693 (Clostridium perfringens (strain 13 / Type A)).